The primary structure comprises 370 residues: DNA replication and repair protein RecF (370 aa).

Position 30 to 37 (30 to 37 (GENAQGKT)) interacts with ATP.

It belongs to the RecF family.

It is found in the cytoplasm. Its function is as follows. The RecF protein is involved in DNA metabolism; it is required for DNA replication and normal SOS inducibility. RecF binds preferentially to single-stranded, linear DNA. It also seems to bind ATP. The polypeptide is DNA replication and repair protein RecF (Listeria monocytogenes serotype 4b (strain CLIP80459)).